The sequence spans 162 residues: Ribosome maturation factor RimM (162 aa).

In terms of domain architecture, PRC barrel spans 91-162 (DGSFYIDDLI…LIDVVIIEGM (72 aa)).

Belongs to the RimM family. As to quaternary structure, binds ribosomal protein uS19.

It localises to the cytoplasm. In terms of biological role, an accessory protein needed during the final step in the assembly of 30S ribosomal subunit, possibly for assembly of the head region. Essential for efficient processing of 16S rRNA. May be needed both before and after RbfA during the maturation of 16S rRNA. It has affinity for free ribosomal 30S subunits but not for 70S ribosomes. The protein is Ribosome maturation factor RimM of Finegoldia magna (strain ATCC 29328 / DSM 20472 / WAL 2508) (Peptostreptococcus magnus).